A 110-amino-acid polypeptide reads, in one-letter code: uncharacterized protein (110 aa).

The first 19 residues, 1–19 (MKYLVGCLCLAAICLSAGA), serve as a signal peptide directing secretion. The N-linked (GlcNAc...) asparagine glycan is linked to Asn101.

As to expression, component of the acid-soluble and acid-insoluble organic matrix of prismatic shell layers (at protein level).

It is found in the secreted. This is an uncharacterized protein from Haliotis asinina (Donkey's ear abalone).